We begin with the raw amino-acid sequence, 170 residues long: Ribosome maturation factor RimP (170 aa).

This sequence belongs to the RimP family.

It is found in the cytoplasm. Its function is as follows. Required for maturation of 30S ribosomal subunits. This chain is Ribosome maturation factor RimP, found in Chlorobaculum parvum (strain DSM 263 / NCIMB 8327) (Chlorobium vibrioforme subsp. thiosulfatophilum).